A 350-amino-acid polypeptide reads, in one-letter code: Induced myeloid leukemia cell differentiation protein Mcl-1 homolog (350 aa).

Glycyl lysine isopeptide (Lys-Gly) (interchain with G-Cter in ubiquitin) cross-links involve residues K5 and K40. Residues C104 to F175 are PEST-like. Phosphoserine is present on S121. K136 participates in a covalent cross-link: Glycyl lysine isopeptide (Lys-Gly) (interchain with G-Cter in ubiquitin). The interval G148 to E170 is disordered. The residue at position 159 (S159) is a Phosphoserine; by GSK3-alpha and GSK3-beta. Phosphoserine is present on S162. T163 is modified (phosphothreonine; by MAPK). Residues K194 and K197 each participate in a glycyl lysine isopeptide (Lys-Gly) (interchain with G-Cter in ubiquitin) cross-link. The short motif at A209–N223 is the BH3 element. Residues H252–A272 carry the BH1 motif. The short motif at D304–F319 is the BH2 element. Residues I328 to L348 form a helical membrane-spanning segment.

It belongs to the Bcl-2 family. In terms of assembly, interacts with HIF3A (via C-terminus domain). Interacts with BOK, BIK, BAX, BAK1, and TPT1. Interacts with unphosphorylated BAD. Interacts with BMF, BBC3 and PMAIP1. Interacts with BOP. Interacts with BCL2L11; may sequester BCL2L11 to prevent its pro-apoptotic activity. Interacts with GIMAP5 and HSPA8/HSC70; the interaction between HSPA8 and MCL1 is impaired in the absence of GIMAP5. In terms of processing, cleaved by CASP3 during apoptosis, yielding a pro-apoptotic C-terminal fragment. Post-translationally, rapidly degraded in the absence of phosphorylation in the PEST region. Phosphorylated on Ser-159, by GSK3, in response to IL3/interleukin-3 withdrawal. Phosphorylation at Ser-159 induces ubiquitination and proteasomal degradation, abrogating the anti-apoptotic activity. Treatment with taxol or okadaic acid induces phosphorylation on additional sites. In terms of processing, ubiquitinated. Ubiquitination is induced by phosphorylation at Ser-159. Deubiquitinated by USP20; leading to increased stability.

Its subcellular location is the membrane. It is found in the cytoplasm. The protein resides in the mitochondrion. It localises to the nucleus. The protein localises to the nucleoplasm. Involved in the regulation of apoptosis versus cell survival, and in the maintenance of viability but not of proliferation. Mediates its effects by interactions with a number of other regulators of apoptosis. This chain is Induced myeloid leukemia cell differentiation protein Mcl-1 homolog (MCL1), found in Felis catus (Cat).